Here is a 650-residue protein sequence, read N- to C-terminus: Rab proteins geranylgeranyltransferase component A 1 (650 aa).

Disordered stretches follow at residues isoleucine 156–lysine 208 and proline 603–glutamate 650. Residues alanine 177 to threonine 190 show a composition bias toward basic and acidic residues. Over residues aspartate 616–glutamate 634 the composition is skewed to polar residues.

This sequence belongs to the Rab GDI family. As to quaternary structure, monomer. Heterotrimer composed of RABGGTA, RABGGTB and CHM; within this trimer, RABGGTA and RABGGTB form the catalytic component B, while CHM (component A) mediates Rab protein binding. Can associate with the Rab GGTase dimer (RGGT or component B) prior to Rab protein binding; the association is stabilized by geranylgeranyl pyrophosphate (GGpp). The CHM:RGGT:Rab complex is destabilized by GGpp. Interacts with RAB1A, RAB1B, RAB7A and RAB27A and mediates their prenylation. Interacts with RAB5A. Interacts with the non-phosphorylated forms of RAB3A, RAB3B, RAB3C, RAB3D, RAB5B, RAB5C RAB8A, RAB8B, RAB10, RAB12, RAB35, and RAB43. As to expression, most abundant in the heart, brain, and spleen. Lower levels seen in the lung, liver, muscle and kidney. Extremely low levels seen in the testis.

It localises to the cytoplasm. The protein resides in the cytosol. Substrate-binding subunit of the Rab geranylgeranyltransferase (GGTase) complex. Binds unprenylated Rab proteins and presents the substrate peptide to the catalytic component B composed of RABGGTA and RABGGTB, and remains bound to it after the geranylgeranyl transfer reaction. The component A is thought to be regenerated by transferring its prenylated Rab back to the donor membrane. Besides, a pre-formed complex consisting of CHM and the Rab GGTase dimer (RGGT or component B) can bind to and prenylate Rab proteins; this alternative pathway is proposed to be the predominant pathway for Rab protein geranylgeranylation. The sequence is that of Rab proteins geranylgeranyltransferase component A 1 (Chm) from Rattus norvegicus (Rat).